A 235-amino-acid chain; its full sequence is MAEKVNNFPPLPKFIPLKPCFYQDFEADIPPQHVSMTKRLYYLWMLNSVTLAVNLVGCLAWLIGGGGATNFGLAFLWLILFTPCSYVCWFRPIYKAFKTDSSFSFMAFFFTFMAQLVISIIQAVGIPGWGVCGWIATISFFGTNIGSAVVMLIPTVMFTVMAVFSFIALSMVHKFYRGSGGSFSKAQEEWTTGAWKNPHVQQAAQNAAMGAAQGAMNQPQTQYSATPNYTYSNEM.

The Cytoplasmic segment spans residues 1-39 (MAEKVNNFPPLPKFIPLKPCFYQDFEADIPPQHVSMTKR). A helical membrane pass occupies residues 40 to 60 (LYYLWMLNSVTLAVNLVGCLA). At 61–67 (WLIGGGG) the chain is on the extracellular side. Residues 68 to 88 (ATNFGLAFLWLILFTPCSYVC) traverse the membrane as a helical segment. At 89 to 102 (WFRPIYKAFKTDSS) the chain is on the cytoplasmic side. Residues 103–125 (FSFMAFFFTFMAQLVISIIQAVG) traverse the membrane as a helical segment. The Extracellular portion of the chain corresponds to 126–148 (IPGWGVCGWIATISFFGTNIGSA). Residues 149-169 (VVMLIPTVMFTVMAVFSFIAL) form a helical membrane-spanning segment. Over 170–235 (SMVHKFYRGS…TPNYTYSNEM (66 aa)) the chain is Cytoplasmic.

Belongs to the SCAMP family. SCAMP5 subfamily. Interacts (via C-terminal part) with SYT1 and SYT2; interaction with synaptotagmins making a link with the SNARE molecules. Interacts with SLC9A7. In terms of tissue distribution, expressed both by neuronal and non-neuronal tissues. Expressed in brain, stomach, thyroid, spinal cord, lymph node, trachea, adrenal gland, bone marrow and in the different parts of brain. In thyroid tissues, it is expressed by the follicular epithelial cells. In the adrenal gland tissues it is detected in the zona fasciculata of the cortex region (at protein level).

The protein resides in the cell membrane. It is found in the golgi apparatus membrane. It localises to the golgi apparatus. The protein localises to the trans-Golgi network membrane. Its subcellular location is the recycling endosome membrane. The protein resides in the cytoplasmic vesicle. It is found in the secretory vesicle. It localises to the synaptic vesicle membrane. Functionally, required for the calcium-dependent exocytosis of signal sequence-containing cytokines such as CCL5. Probably acts in cooperation with the SNARE machinery. May play a role in accumulation of expanded polyglutamine (polyQ) protein huntingtin (HTT) in case of endoplasmic reticulum stress by inhibiting the endocytosis pathway. In Homo sapiens (Human), this protein is Secretory carrier-associated membrane protein 5 (SCAMP5).